The following is a 478-amino-acid chain: Proline--tRNA ligase (478 aa).

The protein belongs to the class-II aminoacyl-tRNA synthetase family. ProS type 3 subfamily. As to quaternary structure, homodimer.

It localises to the cytoplasm. The catalysed reaction is tRNA(Pro) + L-proline + ATP = L-prolyl-tRNA(Pro) + AMP + diphosphate. Catalyzes the attachment of proline to tRNA(Pro) in a two-step reaction: proline is first activated by ATP to form Pro-AMP and then transferred to the acceptor end of tRNA(Pro). This is Proline--tRNA ligase from Methanoregula boonei (strain DSM 21154 / JCM 14090 / 6A8).